The following is a 219-amino-acid chain: Protein DMP5 (219 aa).

The tract at residues M1–P24 is disordered. 4 consecutive transmembrane segments (helical) span residues L51–T71, F82–D102, M142–L162, and V182–P202.

Belongs to the plant DMP1 protein family.

The protein resides in the endoplasmic reticulum membrane. Involved in membrane remodeling. The chain is Protein DMP5 from Arabidopsis thaliana (Mouse-ear cress).